The sequence spans 697 residues: Potassium-transporting ATPase ATP-binding subunit (697 aa).

A run of 4 helical transmembrane segments spans residues 55–75 (PIMF…FLPS), 79–99 (SIPG…VLFA), 245–265 (LTLI…YLGF), and 271–291 (VLVA…LSAI). Residue D324 is the 4-aspartylphosphate intermediate of the active site. ATP contacts are provided by residues D361, E365, 393–400 (FKAETRMS), and K412. D535 and D539 together coordinate Mg(2+). Helical transmembrane passes span 605-625 (FAII…LNIM), 633-653 (AILS…PLAM), and 677-697 (GGVI…GLFI).

Belongs to the cation transport ATPase (P-type) (TC 3.A.3) family. Type IA subfamily. As to quaternary structure, the system is composed of three essential subunits: KdpA, KdpB and KdpC.

It localises to the cell membrane. It carries out the reaction K(+)(out) + ATP + H2O = K(+)(in) + ADP + phosphate + H(+). In terms of biological role, part of the high-affinity ATP-driven potassium transport (or Kdp) system, which catalyzes the hydrolysis of ATP coupled with the electrogenic transport of potassium into the cytoplasm. This subunit is responsible for energy coupling to the transport system and for the release of the potassium ions to the cytoplasm. This chain is Potassium-transporting ATPase ATP-binding subunit, found in Bacillus anthracis (strain CDC 684 / NRRL 3495).